Here is a 48-residue protein sequence, read N- to C-terminus: Mating-type pheromone BAP1(2) (48 aa).

Cys45 is subject to Cysteine methyl ester. Cys45 is lipidated: S-farnesyl cysteine. A propeptide spans 46–48 (VRG) (removed in mature form).

It is found in the cell membrane. Functionally, activates B-regulated development. This chain is Mating-type pheromone BAP1(2) (BAP1(2)), found in Schizophyllum commune (Split gill fungus).